The following is a 465-amino-acid chain: Phosphatidylserine synthase 1 (465 aa).

Over 1 to 35 (MVSAMRSRTLSKDDVNYKMHFRMINEQQVEDITID) the chain is Cytoplasmic. Residues 36-56 (FFYKPHTITLLTFTTVSLMYF) traverse the membrane as a helical segment. The Lumenal portion of the chain corresponds to 57–68 (AFTRENTSQEDN). The chain crosses the membrane as a helical span at residues 69–89 (IWKGILSVIFFFLIISVLAFP). At 90–102 (NGPFTRPHPAIWR) the chain is on the cytoplasmic side. A helical transmembrane segment spans residues 103–123 (MVFGLSVLYFLFLVFLLFLNV). The Lumenal portion of the chain corresponds to 124–186 (EQVKAVMYWL…AMKALLIRSY (63 aa)). Residues 187 to 207 (GLCWTISITWEMTELFFMHLL) form a helical membrane-spanning segment. At 208-216 (PNFAECWWD) the chain is on the cytoplasmic side. The helical transmembrane segment at 217-237 (QVILDILLCNGGGILLGMVVC) threads the bilayer. The Lumenal segment spans residues 238-286 (RFLEMRTYHWASFKDIHTTTGKIKRAVLQFTPASWIYVRWFDPKSSFQR). The helical transmembrane segment at 287–307 (VAGVYLFMIIWQLTELNTFFL) threads the bilayer. Topologically, residues 308–319 (KHIFVFQASHPL) are cytoplasmic. The chain crosses the membrane as a helical span at residues 320–342 (SWCRILFIGIITAPTVRQYYAYL). Topologically, residues 343 to 355 (TDTQCKRVGTQCW) are lumenal. Residues 356–376 (VFGAIAFLEATVCIKFGQDLF) traverse the membrane as a helical segment. The Cytoplasmic portion of the chain corresponds to 377-383 (SKTHLLY). Residues 384–404 (VFLWLFSVAVITFLCLYGMVW) traverse the membrane as a helical segment. Residues 405–465 (YADYCGQREK…GKVTNGVGKK (61 aa)) lie on the Lumenal side of the membrane. The tract at residues 440–465 (PVKQNEGTSRRKNRHKGKVTNGVGKK) is disordered. The segment covering 449 to 465 (RRKNRHKGKVTNGVGKK) has biased composition (basic residues).

Belongs to the phosphatidyl serine synthase family.

The protein localises to the endoplasmic reticulum membrane. The catalysed reaction is a 1,2-diacyl-sn-glycero-3-phosphoethanolamine + L-serine = a 1,2-diacyl-sn-glycero-3-phospho-L-serine + ethanolamine. It carries out the reaction a 1,2-diacyl-sn-glycero-3-phosphocholine + L-serine = a 1,2-diacyl-sn-glycero-3-phospho-L-serine + choline. Its pathway is phospholipid metabolism; phosphatidylserine biosynthesis. Its function is as follows. Catalyzes a base-exchange reaction in which the polar head group of phosphatidylethanolamine (PE) or phosphatidylcholine (PC) is replaced by L-serine. Catalyzes mainly the conversion of phosphatidylcholine but also converts, in vitro and to a lesser extent, phosphatidylethanolamine. In Xenopus tropicalis (Western clawed frog), this protein is Phosphatidylserine synthase 1 (ptdss1).